The following is a 228-amino-acid chain: Flavin-dependent thymidylate synthase (228 aa).

The ThyX domain occupies 1 to 217 (MEYKILDKGF…PWTFEAFLKF (217 aa)). Residues Thr-55, 78–80 (RHR), and Glu-86 each bind FAD. DUMP-binding positions include 75 to 78 (QWFR), 86 to 90 (EASLR), and Arg-156. The ThyX motif signature appears at 78-88 (RHRIGSFNEAS). Residues 172–174 (NAR) and Asn-178 contribute to the FAD site. Arg-183 contributes to the dUMP binding site. The Involved in ionization of N3 of dUMP, leading to its activation role is filled by Arg-183.

It belongs to the thymidylate synthase ThyX family. Homotetramer. Requires FAD as cofactor.

It catalyses the reaction dUMP + (6R)-5,10-methylene-5,6,7,8-tetrahydrofolate + NADPH + H(+) = dTMP + (6S)-5,6,7,8-tetrahydrofolate + NADP(+). It participates in pyrimidine metabolism; dTTP biosynthesis. Its function is as follows. Catalyzes the reductive methylation of 2'-deoxyuridine-5'-monophosphate (dUMP) to 2'-deoxythymidine-5'-monophosphate (dTMP) while utilizing 5,10-methylenetetrahydrofolate (mTHF) as the methyl donor, and NADPH and FADH(2) as the reductant. The polypeptide is Flavin-dependent thymidylate synthase (Thermosipho africanus (strain TCF52B)).